A 271-amino-acid chain; its full sequence is GPN-loop GTPase 3 (271 aa).

13–18 is a binding site for GTP; it reads GAGKST. A Gly-Pro-Asn (GPN)-loop; involved in dimer interface motif is present at residues 70 to 72; sequence GPN. Residue 173–176 coordinates GTP; sequence SKLD.

The protein belongs to the GPN-loop GTPase family. As to quaternary structure, heterodimers with GPN1 or GPN2. Binds to RNA polymerase II (RNAPII).

Small GTPase required for proper nuclear import of RNA polymerase II and III (RNAPII and RNAPIII). May act at an RNAP assembly step prior to nuclear import. In Kluyveromyces lactis (strain ATCC 8585 / CBS 2359 / DSM 70799 / NBRC 1267 / NRRL Y-1140 / WM37) (Yeast), this protein is GPN-loop GTPase 3.